The following is a 230-amino-acid chain: V-type proton ATPase subunit E (230 aa).

Belongs to the V-ATPase E subunit family. As to quaternary structure, V-ATPase is a heteromultimeric enzyme composed of a peripheral catalytic V1 complex (components A to H) attached to an integral membrane V0 proton pore complex (components: a, c, c', c'', d, e, f and VOA1).

The protein localises to the vacuole membrane. In terms of biological role, subunit of the V1 complex of vacuolar(H+)-ATPase (V-ATPase), a multisubunit enzyme composed of a peripheral complex (V1) that hydrolyzes ATP and a membrane integral complex (V0) that translocates protons. V-ATPase is responsible for acidifying and maintaining the pH of intracellular compartments. The sequence is that of V-type proton ATPase subunit E from Neurospora crassa (strain ATCC 24698 / 74-OR23-1A / CBS 708.71 / DSM 1257 / FGSC 987).